The chain runs to 602 residues: Elongation factor 4 (602 aa).

Residues 7–189 (KKIRNFSIIA…SIVKNVPSPK (183 aa)) enclose the tr-type G domain. GTP is bound by residues 19 to 24 (DHGKST) and 136 to 139 (NKID).

Belongs to the TRAFAC class translation factor GTPase superfamily. Classic translation factor GTPase family. LepA subfamily.

The protein localises to the cell membrane. The enzyme catalyses GTP + H2O = GDP + phosphate + H(+). In terms of biological role, required for accurate and efficient protein synthesis under certain stress conditions. May act as a fidelity factor of the translation reaction, by catalyzing a one-codon backward translocation of tRNAs on improperly translocated ribosomes. Back-translocation proceeds from a post-translocation (POST) complex to a pre-translocation (PRE) complex, thus giving elongation factor G a second chance to translocate the tRNAs correctly. Binds to ribosomes in a GTP-dependent manner. The chain is Elongation factor 4 from Alkaliphilus oremlandii (strain OhILAs) (Clostridium oremlandii (strain OhILAs)).